The following is a 153-amino-acid chain: Ribosome maturation factor RimP (153 aa).

The protein belongs to the RimP family.

It is found in the cytoplasm. In terms of biological role, required for maturation of 30S ribosomal subunits. This is Ribosome maturation factor RimP from Desulforamulus reducens (strain ATCC BAA-1160 / DSM 100696 / MI-1) (Desulfotomaculum reducens).